We begin with the raw amino-acid sequence, 2769 residues long: Teneurin-4 (2769 aa).

Over residues 1–22 (MDVKERKPYRSLTRRRDAERRY) the composition is skewed to basic and acidic residues. Positions 1-45 (MDVKERKPYRSLTRRRDAERRYTSSSADSEEGKAPQKSYSSSETL) are disordered. The 341-residue stretch at 1-341 (MDVKERKPYR…KPSKYCNWKC (341 aa)) folds into the Teneurin N-terminal domain. Topologically, residues 1–345 (MDVKERKPYR…YCNWKCAALS (345 aa)) are cytoplasmic. The residue at position 124 (Ser124) is a Phosphoserine. Positions 130-233 (RLWGRSTRSG…PPAGGAQEPA (104 aa)) are disordered. The span at 134–155 (RSTRSGRSSCLSSRANSNLTLT) shows a compositional bias: low complexity. Residues 156–166 (DTEHENTETDH) are compositionally biased toward basic and acidic residues. At Thr178 the chain carries Phosphothreonine. Residues 187–211 (HTPNQHHAASINSLNRGNFTPRSNP) are compositionally biased toward polar residues. Residues 346–366 (AIVISATLVILLAYFVAMHLF) traverse the membrane as a helical segment. Topologically, residues 367–2769 (GLNWHLQPME…FMRQSEMGRR (2403 aa)) are extracellular. Positions 400 to 426 (PSGGTGLETPDRKGKGTTEGKPSSFFP) are disordered. Residues 408–417 (TPDRKGKGTT) show a composition bias toward basic and acidic residues. The N-linked (GlcNAc...) asparagine glycan is linked to Asn467. The disordered stretch occupies residues 507–526 (ARSLEGTPRQSRGTVPPSSH). Residues 514 to 526 (PRQSRGTVPPSSH) show a composition bias toward polar residues. EGF-like domains are found at residues 562–593 (SVDN…PDCG), 594–624 (RASC…AECD), 626–658 (PTNQ…ESCE), 659–690 (EVDC…TNCE), 692–725 (PRAT…HDCS), 726–757 (IEIC…ACDQ), 758–787 (RACH…EHCT), and 788–831 (IAHY…AGCD). 22 disulfides stabilise this stretch: Cys566–Cys576, Cys570–Cys581, Cys583–Cys592, Cys601–Cys612, Cys614–Cys623, Cys630–Cys641, Cys635–Cys646, Cys648–Cys657, Cys662–Cys673, Cys667–Cys678, Cys680–Cys689, Cys700–Cys713, Cys715–Cys724, Cys729–Cys739, Cys733–Cys744, Cys746–Cys755, Cys760–Cys770, Cys764–Cys775, Cys777–Cys786, Cys800–Cys810, Cys804–Cys819, and Cys821–Cys830. N-linked (GlcNAc...) asparagine glycosylation is found at Asn940 and Asn1259. 5 NHL repeats span residues 1216–1259 (SCPS…PSGN), 1264–1308 (LELR…IKST), 1334–1378 (TRCG…NGII), 1393–1444 (LSCD…VAGR), and 1523–1566 (CFSG…IRKN). The stretch at 1576–1595 (YELSSPIDQELYLFDTTGKH) is one YD 1 repeat. N-linked (GlcNAc...) asparagine glycosylation is present at Asn1609. YD repeat units follow at residues 1612–1632 (YTGD…VNVR), 1675–1694 (YHGN…WTTF), and 1695–1717 (YEYD…SSFR). Asn1705, Asn1741, Asn1799, and Asn1884 each carry an N-linked (GlcNAc...) asparagine glycan. YD repeat units follow at residues 1887 to 1906 (YSPG…ERME), 1928 to 1946 (YLEK…YIFE), 1947 to 1967 (FDKN…QTLE), 1974 to 1991 (YYRN…VIQD), 1992 to 2013 (FTED…VIYK), 2014 to 2031 (YGKL…TKVS), 2034 to 2054 (YDET…FTCT), 2057 to 2077 (YRQI…EGMV), 2085 to 2104 (YDNS…TPLP), 2110 to 2127 (YDDV…GVIY), 2128 to 2154 (YDIN…MKEV), 2156 to 2169 (YEIF…MTVQ), 2170 to 2193 (YDNM…TRYS), 2196 to 2216 (YDAD…WRYS), 2217 to 2237 (YDLN…LTPL), 2239 to 2259 (YDIR…DEDG), 2271 to 2291 (YNSA…SVRY), and 2293 to 2313 (YDGL…LQFF). Asn1985 is a glycosylation site (N-linked (GlcNAc...) asparagine). Residue Asn2188 is glycosylated (N-linked (GlcNAc...) asparagine). Asn2328 is a glycosylation site (N-linked (GlcNAc...) asparagine). One copy of the YD 23 repeat lies at 2339 to 2380 (YDLQGHLFAMELSSGDEFYIACDNIGTPLAVFSGTGLMIKQI). N-linked (GlcNAc...) asparagine glycosylation occurs at Asn2646.

This sequence belongs to the tenascin family. Teneurin subfamily. In terms of assembly, homodimer; disulfide-linked. May also form heterodimer with either TENM1 or TENM2 or TENM3.

It localises to the cell membrane. It is found in the cell projection. The protein localises to the nucleus. Its subcellular location is the cytoplasm. Functionally, involved in neural development, regulating the establishment of proper connectivity within the nervous system. Plays a role in the establishment of the anterior-posterior axis during gastrulation. Regulates the differentiation and cellular process formation of oligodendrocytes and myelination of small-diameter axons in the central nervous system (CNS). Promotes activation of focal adhesion kinase. May function as a cellular signal transducer. The chain is Teneurin-4 (TENM4) from Homo sapiens (Human).